Here is a 381-residue protein sequence, read N- to C-terminus: Mannitol-1-phosphate 5-dehydrogenase (381 aa).

Position 3 to 14 (A3 to G14) interacts with NAD(+).

It belongs to the mannitol dehydrogenase family.

The enzyme catalyses D-mannitol 1-phosphate + NAD(+) = beta-D-fructose 6-phosphate + NADH + H(+). This is Mannitol-1-phosphate 5-dehydrogenase from Photobacterium profundum (strain SS9).